Consider the following 617-residue polypeptide: mRNA-decapping enzyme 1B (617 aa).

Alanine 2 carries the N-acetylalanine modification. Serine 147 bears the Phosphoserine mark. Tyrosine 191 is subject to Phosphotyrosine. Disordered stretches follow at residues 195–222 (NLIK…LDPE) and 243–266 (TVEP…KLPI). Residues 205–219 (SENQQQRIPQPNQTL) show a composition bias toward polar residues. Residues 252 to 261 (QQQQQQQQQQ) are compositionally biased toward low complexity. Phosphoserine is present on residues serine 275 and serine 336. The tract at residues 362–426 (TPGAANKCDP…VGHQAHGREQ (65 aa)) is disordered. Residues 371-381 (PSTPAPASSAA) are compositionally biased toward low complexity. Position 392 is a phosphothreonine (threonine 392). Phosphoserine is present on residues serine 448 and serine 511.

Belongs to the DCP1 family. Interacts with DCP1A. In terms of assembly, (Microbial infection) Interacts with rotavirus A non-structural protein 2; this interaction probably plays a role in the sequestration of DCP1B in viral factories. Interacts with rotavirus A non-structural protein 5; this interaction probably plays a role in its sequestration in viral factories.

It is found in the cytoplasm. It localises to the nucleus. The enzyme catalyses a 5'-end (N(7)-methyl 5'-triphosphoguanosine)-ribonucleoside in mRNA + H2O = N(7)-methyl-GDP + a 5'-end phospho-ribonucleoside in mRNA + 2 H(+). Its function is as follows. May play a role in the degradation of mRNAs, both in normal mRNA turnover and in nonsense-mediated mRNA decay. May remove the 7-methyl guanine cap structure from mRNA molecules, yielding a 5'-phosphorylated mRNA fragment and 7m-GDP. The protein is mRNA-decapping enzyme 1B (DCP1B) of Homo sapiens (Human).